We begin with the raw amino-acid sequence, 474 residues long: Tocopherol cyclase, chloroplastic (474 aa).

A chloroplast-targeting transit peptide spans 1-65 (MNLAVAAALP…TPTPQDRSLR (65 aa)).

Present in all green tissues, both in bundle sheath and in mesophyll cells.

The protein resides in the plastid. The protein localises to the chloroplast. It carries out the reaction gamma-tocopherol = 2,3-dimethyl-6-phytylbenzene-1,4-diol. Its pathway is cofactor biosynthesis; tocopherol biosynthesis. Involved in the synthesis of tocopherols (vitamin E), which presumably protect photosynthetic complexes from oxidative stress. Catalyzes the conversion of 2,3-dimethyl-5-phytyl-1,4-hydroquinone (DMPQ) to gamma-tocopherol. The chain is Tocopherol cyclase, chloroplastic from Zea mays (Maize).